The following is a 329-amino-acid chain: Malate dehydrogenase (329 aa).

An NAD(+)-binding site is contributed by 12–18 (GAAGQIG). Residues Arg93 and Arg99 each coordinate substrate. Residues Asn106, Gln113, and 130-132 (VGN) each bind NAD(+). Substrate contacts are provided by Asn132 and Arg163. His188 acts as the Proton acceptor in catalysis.

This sequence belongs to the LDH/MDH superfamily. MDH type 2 family.

The catalysed reaction is (S)-malate + NAD(+) = oxaloacetate + NADH + H(+). Its function is as follows. Catalyzes the reversible oxidation of malate to oxaloacetate. This Frankia alni (strain DSM 45986 / CECT 9034 / ACN14a) protein is Malate dehydrogenase.